We begin with the raw amino-acid sequence, 714 residues long: Probable serine/threonine-protein kinase mkcB (714 aa).

Positions Met1–Phe12 are enriched in basic residues. Disordered regions lie at residues Met1–Ser267 and Gly281–Pro349. Residues Gly23–Gln35 show a composition bias toward basic and acidic residues. Residues Ser62–Leu83 show a composition bias toward low complexity. The segment covering His84–Glu94 has biased composition (polar residues). 2 stretches are compositionally biased toward low complexity: residues Leu95–Leu111 and Pro120–Thr166. The span at Pro167–Leu177 shows a compositional bias: polar residues. Composition is skewed to low complexity over residues Ser178–Thr241 and Leu254–Ser267. Residues Ser282–Pro294 are compositionally biased toward polar residues. Composition is skewed to low complexity over residues Asn300–Ser314 and Asn324–Asn337. The Protein kinase domain maps to Tyr438–Ile687. Residues Val444–Val452 and Lys467 each bind ATP. Asp558 serves as the catalytic Proton acceptor.

It belongs to the protein kinase superfamily. STE Ser/Thr protein kinase family. STE20 subfamily. Mg(2+) is required as a cofactor. As to expression, expressed at equal levels in prestalk and prespore cells.

The enzyme catalyses L-seryl-[protein] + ATP = O-phospho-L-seryl-[protein] + ADP + H(+). It catalyses the reaction L-threonyl-[protein] + ATP = O-phospho-L-threonyl-[protein] + ADP + H(+). In Dictyostelium discoideum (Social amoeba), this protein is Probable serine/threonine-protein kinase mkcB.